A 403-amino-acid chain; its full sequence is Probable tubulin--tyrosine ligase C12B10.04 (403 aa).

Positions 9–386 (KVYVNYRDEY…PFFESSTKRN (378 aa)) constitute a TTL domain.

It belongs to the tubulin--tyrosine ligase family. Requires Mg(2+) as cofactor. The cofactor is K(+).

Its subcellular location is the cytoplasm. It is found in the nucleus. The enzyme catalyses C-terminal L-alpha-aminoacyl-L-glutamyl-L-glutamyl-[tubulin] + L-tyrosine + ATP = C-terminal L-alpha-aminoacyl-L-glutamyl-L-glutamyl-L-tyrosyl-[tubulin] + ADP + phosphate + H(+). Its function is as follows. Probable tubulin--tyrosine ligase. This chain is Probable tubulin--tyrosine ligase C12B10.04, found in Schizosaccharomyces pombe (strain 972 / ATCC 24843) (Fission yeast).